The chain runs to 191 residues: uncharacterized protein (191 aa).

The region spanning 6–66 (GLTQKMIVDA…ELAVRGLTKL (61 aa)) is the HTH tetR-type domain. Positions 29–48 (SLAALSKKMNVRPPSLYNHI) form a DNA-binding region, H-T-H motif.

This is an uncharacterized protein from Bacillus subtilis (strain 168).